A 111-amino-acid chain; its full sequence is Disintegrin subunit alpha (111 aa).

An N-terminal signal peptide occupies residues Met1 to Ser20. Positions Ile21–Lys44 are excised as a propeptide. Residues Gly45–Ala111 enclose the Disintegrin domain. Intrachain disulfides connect Cys53/Cys76, Cys67/Cys73, Cys72/Cys97, and Cys85/Cys104. The Cell attachment site signature appears at Arg89–Asp91. A propeptide spanning residues Tyr110 to Ala111 is cleaved from the precursor.

The protein belongs to the disintegrin family. Dimeric disintegrin subfamily. Heterodimer with subunit beta; disulfide-linked. Expressed by the venom gland.

The protein localises to the secreted. Acts by binding to alpha-IIb/beta-3 (ITGA2B/ITGB3) on the platelet surface and inhibits both ADP-induced platelet aggregation and platelet aggregate dissociation in human platelet-rich plasma. In Agkistrodon piscivorus leucostoma (Western cottonmouth), this protein is Disintegrin subunit alpha.